We begin with the raw amino-acid sequence, 67 residues long: UPF0337 protein msl9551 (67 aa).

This sequence belongs to the UPF0337 (CsbD) family.

The polypeptide is UPF0337 protein msl9551 (Mesorhizobium japonicum (strain LMG 29417 / CECT 9101 / MAFF 303099) (Mesorhizobium loti (strain MAFF 303099))).